The sequence spans 183 residues: Putative 3-methyladenine DNA glycosylase (183 aa).

The protein belongs to the DNA glycosylase MPG family.

The polypeptide is Putative 3-methyladenine DNA glycosylase (Rickettsia rickettsii (strain Iowa)).